A 258-amino-acid chain; its full sequence is Acetylglutamate kinase (258 aa).

Substrate-binding positions include 41 to 42 (GG), arginine 63, and asparagine 156.

This sequence belongs to the acetylglutamate kinase family. ArgB subfamily.

The protein localises to the cytoplasm. It carries out the reaction N-acetyl-L-glutamate + ATP = N-acetyl-L-glutamyl 5-phosphate + ADP. Its pathway is amino-acid biosynthesis; L-arginine biosynthesis; N(2)-acetyl-L-ornithine from L-glutamate: step 2/4. In terms of biological role, catalyzes the ATP-dependent phosphorylation of N-acetyl-L-glutamate. This chain is Acetylglutamate kinase, found in Bacillus velezensis (strain DSM 23117 / BGSC 10A6 / LMG 26770 / FZB42) (Bacillus amyloliquefaciens subsp. plantarum).